We begin with the raw amino-acid sequence, 534 residues long: Glycolytic genes transcriptional activator GCR2 (534 aa).

The tract at residues 29 to 122 (LQSVTNSPQT…TGNNASSSAT (94 aa)) is disordered. Residues 30-43 (QSVTNSPQTTTNTP) show a composition bias toward low complexity. Over residues 64–88 (SDSTPNIDEIITSTGSNALTKTNSD) the composition is skewed to polar residues. Residues 89–122 (SANGTPNGNSSSTSAISNASNPATTGNNASSSAT) are compositionally biased toward low complexity. Phosphoserine is present on serine 151. Positions 230–333 (LTQGRRKGNS…SNPGTNMLFD (104 aa)) are disordered. Positions 238-252 (NSLNTSTKGSPSDLQ) are enriched in polar residues. Low complexity predominate over residues 253 to 279 (GINNGNNNGNNGNIGNGSNIKNYGNKN). A Nuclear localization signal motif is present at residues 281–288 (PNNRTKKR). The span at 295–304 (NAKNGKNNKN) shows a compositional bias: low complexity. A compositionally biased stretch (polar residues) spans 312-328 (ITDTSAFSNTTISNPGT). Phosphoserine is present on residues serine 406 and serine 409. The interval 497–534 (IVQLERELELQRQETQWLRKMLIEDMGCVRSMLRDLQR) is leucine-zipper.

In terms of assembly, homodimer via the leucine-zipper domain. Forms a complex with a GCR1 homodimer.

It is found in the nucleus. Transcriptional activator required for the expression of glycolytic genes. Enhances the CT box-dependent transcriptional activation of a RAP1-GCR1 complex. Required for GCR1 phosphorylation. The protein is Glycolytic genes transcriptional activator GCR2 (GCR2) of Saccharomyces cerevisiae (strain ATCC 204508 / S288c) (Baker's yeast).